The following is a 274-amino-acid chain: MAIVKCKPTSPGRRHLVKVVNKELHTGKPYAPLLDTKSKSGGRNNNGRITVRHIGGGHKQHYRIVDFKRLKDGIPAKVERLEYDPNRSANIALVLYADGERRYILAPKGLSAGDSILSGVGAPIKPGNTMPLRNIPLGSVIHAIELKPGKGAQIARAAGTYAQLVAKDGAYVTLRLRSGEMRKIESDCRATLGEIGNSEHMLRSLGKAGASRWRGVRPTVRGVAMNPVDHPHGGGEGKTSGGRHPVSPWGVPTKGYKTRSNKRTDKFIVRRRAK.

The interval 223–274 (VAMNPVDHPHGGGEGKTSGGRHPVSPWGVPTKGYKTRSNKRTDKFIVRRRAK) is disordered.

The protein belongs to the universal ribosomal protein uL2 family. Part of the 50S ribosomal subunit. Forms a bridge to the 30S subunit in the 70S ribosome.

Functionally, one of the primary rRNA binding proteins. Required for association of the 30S and 50S subunits to form the 70S ribosome, for tRNA binding and peptide bond formation. It has been suggested to have peptidyltransferase activity; this is somewhat controversial. Makes several contacts with the 16S rRNA in the 70S ribosome. The protein is Large ribosomal subunit protein uL2 of Colwellia psychrerythraea (strain 34H / ATCC BAA-681) (Vibrio psychroerythus).